The following is a 44-amino-acid chain: Protein PsbN (44 aa).

Residues 6 to 26 (FFFTLFLWFFLLSITIYSIYI) traverse the membrane as a helical segment.

This sequence belongs to the PsbN family.

The protein resides in the plastid. It localises to the chloroplast thylakoid membrane. May play a role in photosystem I and II biogenesis. In Oedogonium cardiacum (Filamentous green alga), this protein is Protein PsbN.